Here is a 556-residue protein sequence, read N- to C-terminus: Arginine--tRNA ligase (556 aa).

The short motif at 132 to 142 is the 'HIGH' region element; sequence ANPTGDLHLGH.

It belongs to the class-I aminoacyl-tRNA synthetase family. Monomer.

The protein resides in the cytoplasm. It catalyses the reaction tRNA(Arg) + L-arginine + ATP = L-arginyl-tRNA(Arg) + AMP + diphosphate. The protein is Arginine--tRNA ligase of Listeria monocytogenes serotype 4b (strain CLIP80459).